The chain runs to 375 residues: tRNA-specific 2-thiouridylase MnmA (375 aa).

ATP-binding positions include 16-23 (GMSGGVDS) and M42. An interaction with target base in tRNA region spans residues 102–104 (NPD). Catalysis depends on C107, which acts as the Nucleophile. C107 and C203 are joined by a disulfide. Position 131 (G131) interacts with ATP. The interval 153-155 (KDQ) is interaction with tRNA. The active-site Cysteine persulfide intermediate is C203. An interaction with tRNA region spans residues 315–316 (RY).

This sequence belongs to the MnmA/TRMU family.

It is found in the cytoplasm. The enzyme catalyses S-sulfanyl-L-cysteinyl-[protein] + uridine(34) in tRNA + AH2 + ATP = 2-thiouridine(34) in tRNA + L-cysteinyl-[protein] + A + AMP + diphosphate + H(+). Functionally, catalyzes the 2-thiolation of uridine at the wobble position (U34) of tRNA, leading to the formation of s(2)U34. The sequence is that of tRNA-specific 2-thiouridylase MnmA from Pseudomonas aeruginosa (strain UCBPP-PA14).